Here is a 642-residue protein sequence, read N- to C-terminus: Threonine--tRNA ligase (642 aa).

The 61-residue stretch at 1–61 (MPIITLPDGS…EADASLAIIT (61 aa)) folds into the TGS domain. The segment at 243-534 (DHRKIGKQLD…LTEEYAGLFP (292 aa)) is catalytic. Positions 334, 385, and 511 each coordinate Zn(2+).

Belongs to the class-II aminoacyl-tRNA synthetase family. Homodimer. The cofactor is Zn(2+).

The protein localises to the cytoplasm. The enzyme catalyses tRNA(Thr) + L-threonine + ATP = L-threonyl-tRNA(Thr) + AMP + diphosphate + H(+). Its function is as follows. Catalyzes the attachment of threonine to tRNA(Thr) in a two-step reaction: L-threonine is first activated by ATP to form Thr-AMP and then transferred to the acceptor end of tRNA(Thr). Also edits incorrectly charged L-seryl-tRNA(Thr). The polypeptide is Threonine--tRNA ligase (Aeromonas hydrophila subsp. hydrophila (strain ATCC 7966 / DSM 30187 / BCRC 13018 / CCUG 14551 / JCM 1027 / KCTC 2358 / NCIMB 9240 / NCTC 8049)).